The following is a 418-amino-acid chain: CCA-adding enzyme (418 aa).

Positions 54 and 57 each coordinate ATP. Positions 54 and 57 each coordinate CTP. Residues aspartate 66, aspartate 68, and aspartate 118 each contribute to the Mg(2+) site. Positions 141, 161, and 170 each coordinate ATP. Histidine 141, lysine 161, and tyrosine 170 together coordinate CTP.

The protein belongs to the tRNA nucleotidyltransferase/poly(A) polymerase family. Archaeal CCA-adding enzyme subfamily. Homodimer. Mg(2+) serves as cofactor.

It carries out the reaction a tRNA precursor + 2 CTP + ATP = a tRNA with a 3' CCA end + 3 diphosphate. The catalysed reaction is a tRNA with a 3' CCA end + 2 CTP + ATP = a tRNA with a 3' CCACCA end + 3 diphosphate. Catalyzes the addition and repair of the essential 3'-terminal CCA sequence in tRNAs without using a nucleic acid template. Adds these three nucleotides in the order of C, C, and A to the tRNA nucleotide-73, using CTP and ATP as substrates and producing inorganic pyrophosphate. tRNA 3'-terminal CCA addition is required both for tRNA processing and repair. Also involved in tRNA surveillance by mediating tandem CCA addition to generate a CCACCA at the 3' terminus of unstable tRNAs. While stable tRNAs receive only 3'-terminal CCA, unstable tRNAs are marked with CCACCA and rapidly degraded. This is CCA-adding enzyme from Pyrobaculum islandicum (strain DSM 4184 / JCM 9189 / GEO3).